Reading from the N-terminus, the 282-residue chain is Protein DOG1-like 3 (282 aa).

Positions 11–254 constitute a DOG1 domain; sequence EQLQKGCYYE…HEWGRVREEQ (244 aa).

The polypeptide is Protein DOG1-like 3 (Arabidopsis thaliana (Mouse-ear cress)).